Consider the following 375-residue polypeptide: Pectate lyase C (375 aa).

The first 22 residues, 1 to 22 (MKSLITPITAGLLLALSQPLLA), serve as a signal peptide directing secretion. Residues Cys94 and Cys177 are joined by a disulfide bond. Positions 151, 153, 188, and 192 each coordinate Ca(2+). Arg240 is an active-site residue. Cys351 and Cys374 are disulfide-bonded.

The protein belongs to the polysaccharide lyase 1 family. PLADES subfamily. Ca(2+) is required as a cofactor.

It is found in the secreted. The catalysed reaction is Eliminative cleavage of (1-&gt;4)-alpha-D-galacturonan to give oligosaccharides with 4-deoxy-alpha-D-galact-4-enuronosyl groups at their non-reducing ends.. It participates in glycan metabolism; pectin degradation; 2-dehydro-3-deoxy-D-gluconate from pectin: step 2/5. In terms of biological role, involved in maceration and soft-rotting of plant tissue. The chain is Pectate lyase C from Dickeya chrysanthemi (Pectobacterium chrysanthemi).